The following is a 396-amino-acid chain: NADH-quinone oxidoreductase subunit D (396 aa).

The protein belongs to the complex I 49 kDa subunit family. As to quaternary structure, NDH-1 is composed of 14 different subunits. Subunits NuoB, C, D, E, F, and G constitute the peripheral sector of the complex.

The protein localises to the cell inner membrane. It carries out the reaction a quinone + NADH + 5 H(+)(in) = a quinol + NAD(+) + 4 H(+)(out). Functionally, NDH-1 shuttles electrons from NADH, via FMN and iron-sulfur (Fe-S) centers, to quinones in the respiratory chain. The immediate electron acceptor for the enzyme in this species is believed to be ubiquinone. Couples the redox reaction to proton translocation (for every two electrons transferred, four hydrogen ions are translocated across the cytoplasmic membrane), and thus conserves the redox energy in a proton gradient. The protein is NADH-quinone oxidoreductase subunit D of Chelativorans sp. (strain BNC1).